The chain runs to 432 residues: Histidinol dehydrogenase (432 aa).

Residues serine 240, glutamine 262, and histidine 265 each coordinate substrate. Glutamine 262 and histidine 265 together coordinate Zn(2+). Residues glutamate 330 and histidine 331 each act as proton acceptor in the active site. Positions 331, 364, 418, and 423 each coordinate substrate. Zn(2+) is bound at residue aspartate 364. Histidine 423 provides a ligand contact to Zn(2+).

The protein belongs to the histidinol dehydrogenase family. Zn(2+) serves as cofactor.

It catalyses the reaction L-histidinol + 2 NAD(+) + H2O = L-histidine + 2 NADH + 3 H(+). It functions in the pathway amino-acid biosynthesis; L-histidine biosynthesis; L-histidine from 5-phospho-alpha-D-ribose 1-diphosphate: step 9/9. Its function is as follows. Catalyzes the sequential NAD-dependent oxidations of L-histidinol to L-histidinaldehyde and then to L-histidine. In Wolinella succinogenes (strain ATCC 29543 / DSM 1740 / CCUG 13145 / JCM 31913 / LMG 7466 / NCTC 11488 / FDC 602W) (Vibrio succinogenes), this protein is Histidinol dehydrogenase.